The chain runs to 391 residues: Rhizopuspepsin-3 (391 aa).

The N-terminal stretch at 1-21 is a signal peptide; that stretch reads MKFTLISSCVTLALMTLSIEA. Positions 22–68 are cleaved as a propeptide — activation peptide; the sequence is APSGKKVNIPLTKNKDYKPNAKNAIQKAIAKYHRHRSVSSSNSTSTD. The Peptidase A1 domain occupies 84 to 388; that stretch reads YYGEVTVGTP…NPEVPHVQIA (305 aa). Residue D102 is part of the active site. C115 and C118 are joined by a disulfide. The active site involves D285. Residues C319 and C352 are joined by a disulfide bond.

Belongs to the peptidase A1 family.

It catalyses the reaction Hydrolysis of proteins with broad specificity similar to that of pepsin A, preferring hydrophobic residues at P1 and P1'. Clots milk and activates trypsinogen. Does not cleave 4-Gln-|-His-5, but does cleave 10-His-|-Leu-11 and 12-Val-|-Glu-13 in B chain of insulin.. The chain is Rhizopuspepsin-3 from Rhizopus niveus.